Here is a 521-residue protein sequence, read N- to C-terminus: NAD(P)H-quinone oxidoreductase subunit 2 (521 aa).

14 helical membrane-spanning segments follow: residues 16 to 36 (ILPE…DLIG), 43 to 63 (WLPY…YTAW), 80 to 100 (LSIV…LMSI), 110 to 130 (LAEF…LSGA), 133 to 153 (LVMI…MTGY), 168 to 188 (LLIG…LYGL), 211 to 231 (LGLA…ISAV), 245 to 265 (PTPV…ALAI), 279 to 299 (WHLI…VVAL), 307 to 327 (MLAY…TAGT), 335 to 355 (VFYL…VILF), 379 to 399 (LGLS…GFFG), 401 to 421 (IYLF…LALV), and 467 to 487 (VGLV…NPLF).

It belongs to the complex I subunit 2 family. NDH-1 can be composed of about 15 different subunits; different subcomplexes with different compositions have been identified which probably have different functions.

It localises to the cellular thylakoid membrane. The catalysed reaction is a plastoquinone + NADH + (n+1) H(+)(in) = a plastoquinol + NAD(+) + n H(+)(out). It catalyses the reaction a plastoquinone + NADPH + (n+1) H(+)(in) = a plastoquinol + NADP(+) + n H(+)(out). Functionally, NDH-1 shuttles electrons from an unknown electron donor, via FMN and iron-sulfur (Fe-S) centers, to quinones in the respiratory and/or the photosynthetic chain. The immediate electron acceptor for the enzyme in this species is believed to be plastoquinone. Couples the redox reaction to proton translocation, and thus conserves the redox energy in a proton gradient. Cyanobacterial NDH-1 also plays a role in inorganic carbon-concentration. The protein is NAD(P)H-quinone oxidoreductase subunit 2 of Crocosphaera subtropica (strain ATCC 51142 / BH68) (Cyanothece sp. (strain ATCC 51142)).